Consider the following 183-residue polypeptide: Apo-citrate lyase phosphoribosyl-dephospho-CoA transferase (183 aa).

It belongs to the CitX family.

It carries out the reaction apo-[citrate lyase ACP] + 2'-(5''-triphospho-alpha-D-ribosyl)-3'-dephospho-CoA = holo-[citrate lyase ACP] + diphosphate. Transfers 2-(5''-triphosphoribosyl)-3'-dephosphocoenzyme-A on a serine residue to the apo-acyl carrier protein (gamma chain) of the citrate lyase to yield holo-acyl carrier protein. This chain is Apo-citrate lyase phosphoribosyl-dephospho-CoA transferase, found in Escherichia coli O139:H28 (strain E24377A / ETEC).